A 114-amino-acid polypeptide reads, in one-letter code: Large ribosomal subunit protein uL22 (114 aa).

This sequence belongs to the universal ribosomal protein uL22 family. As to quaternary structure, part of the 50S ribosomal subunit.

In terms of biological role, this protein binds specifically to 23S rRNA; its binding is stimulated by other ribosomal proteins, e.g. L4, L17, and L20. It is important during the early stages of 50S assembly. It makes multiple contacts with different domains of the 23S rRNA in the assembled 50S subunit and ribosome. The globular domain of the protein is located near the polypeptide exit tunnel on the outside of the subunit, while an extended beta-hairpin is found that lines the wall of the exit tunnel in the center of the 70S ribosome. This is Large ribosomal subunit protein uL22 from Desulfitobacterium hafniense (strain DSM 10664 / DCB-2).